A 375-amino-acid chain; its full sequence is F-box/kelch-repeat protein At4g39580 (375 aa).

Residues 20–66 (PTTNLFLPDDILLSSLSRISRLYYPTFSLVSKSFRSLIASPELYQTR) form the F-box domain. 3 Kelch repeats span residues 132–178 (NIYA…VLDG), 179–225 (KIYV…KSVG), and 229–269 (KYHL…VINN).

This Arabidopsis thaliana (Mouse-ear cress) protein is F-box/kelch-repeat protein At4g39580.